The following is a 341-amino-acid chain: L-threonine 3-dehydrogenase (341 aa).

Cys38 provides a ligand contact to Zn(2+). Catalysis depends on charge relay system residues Thr40 and His43. His63, Glu64, Cys93, Cys96, Cys99, and Cys107 together coordinate Zn(2+). Residues Ile175, Asp195, Arg200, Leu262–Ile264, and Ile286–Tyr287 each bind NAD(+).

This sequence belongs to the zinc-containing alcohol dehydrogenase family. Homotetramer. It depends on Zn(2+) as a cofactor.

It localises to the cytoplasm. It carries out the reaction L-threonine + NAD(+) = (2S)-2-amino-3-oxobutanoate + NADH + H(+). It functions in the pathway amino-acid degradation; L-threonine degradation via oxydo-reductase pathway; glycine from L-threonine: step 1/2. Its function is as follows. Catalyzes the NAD(+)-dependent oxidation of L-threonine to 2-amino-3-ketobutyrate. The protein is L-threonine 3-dehydrogenase of Chromobacterium violaceum (strain ATCC 12472 / DSM 30191 / JCM 1249 / CCUG 213 / NBRC 12614 / NCIMB 9131 / NCTC 9757 / MK).